The chain runs to 403 residues: Probable N-acetyltransferase HLS1 (403 aa).

The 176-residue stretch at 2 to 177 folds into the N-acetyltransferase domain; it reads TVVREYDPTR…VNPVYAHRVN (176 aa).

This sequence belongs to the acetyltransferase family.

Ethylene-responsive N-acetyltransferase required for differential cell elongation in the hypocotyl. Regulates apical hook formation of dark-grown seedlings. May control differential cell growth by regulating auxin activity. May be involved in negative feedback regulation of auxin homeostasis through the control of GH3-like genes. Modulates de novo shoot organogenesis. This chain is Probable N-acetyltransferase HLS1 (HLS1), found in Arabidopsis thaliana (Mouse-ear cress).